We begin with the raw amino-acid sequence, 151 residues long: Flagellar assembly factor FliW (151 aa).

This sequence belongs to the FliW family. Interacts with translational regulator CsrA and flagellin(s).

It localises to the cytoplasm. Its function is as follows. Acts as an anti-CsrA protein, binds CsrA and prevents it from repressing translation of its target genes, one of which is flagellin. Binds to flagellin and participates in the assembly of the flagellum. The protein is Flagellar assembly factor FliW of Halalkalibacterium halodurans (strain ATCC BAA-125 / DSM 18197 / FERM 7344 / JCM 9153 / C-125) (Bacillus halodurans).